Here is an 884-residue protein sequence, read N- to C-terminus: Protein translocase subunit SecA (884 aa).

Residues Gln-83, 101-105, and Asp-491 each bind ATP; that span reads GEGKT.

This sequence belongs to the SecA family.

It localises to the plastid. It is found in the chloroplast stroma. The protein localises to the chloroplast thylakoid membrane. The enzyme catalyses ATP + H2O + cellular proteinSide 1 = ADP + phosphate + cellular proteinSide 2.. In terms of biological role, has a central role in coupling the hydrolysis of ATP to the transfer of proteins across the thylakoid membrane. This Pyropia yezoensis (Susabi-nori) protein is Protein translocase subunit SecA.